Consider the following 471-residue polypeptide: Glutamate--tRNA ligase (471 aa).

Positions 9–19 (PSPTGYLHVGG) match the 'HIGH' region motif. The Zn(2+) site is built by cysteine 98, cysteine 100, cysteine 125, and histidine 127. The 'KMSKS' region signature appears at 237-241 (KLSKR). An ATP-binding site is contributed by lysine 240.

Belongs to the class-I aminoacyl-tRNA synthetase family. Glutamate--tRNA ligase type 1 subfamily. Monomer. The cofactor is Zn(2+).

The protein resides in the cytoplasm. It catalyses the reaction tRNA(Glu) + L-glutamate + ATP = L-glutamyl-tRNA(Glu) + AMP + diphosphate. In terms of biological role, catalyzes the attachment of glutamate to tRNA(Glu) in a two-step reaction: glutamate is first activated by ATP to form Glu-AMP and then transferred to the acceptor end of tRNA(Glu). This is Glutamate--tRNA ligase from Shigella flexneri.